Reading from the N-terminus, the 200-residue chain is TATA-box-binding protein 2 (200 aa).

Repeat copies occupy residues 25-101 (LQNI…ARII) and 115-192 (IQNI…YPVL).

Belongs to the TBP family. As to quaternary structure, belongs to the TFIID complex together with the TBP-associated factors (TAFs). Binds DNA as monomer.

It is found in the nucleus. General transcription factor that functions at the core of the DNA-binding multiprotein factor TFIID. Binding of TFIID to the TATA box is the initial transcriptional step of the pre-initiation complex (PIC), playing a role in the activation of eukaryotic genes transcribed by RNA polymerase II. In Zea mays (Maize), this protein is TATA-box-binding protein 2 (TBP2).